The chain runs to 531 residues: MADILLLDNIDSFTYNLADQLRSNGHNVVIYRNHIPAQTLIERLATMSNPVLMLSPGPGVPSEAGCMPELLTRLRGKLPIIGICLGHQAIVEAYGGYVGQAGEILHGKASSIEHDGQAMFAGLTNPLPVARYHSLVGSNIPAGLTINAHFNGMVMAVRHDADRVCGFQFHPESILTTQGARLLEQTLAWAQQKLEPANTLQPILEKLYQAQTLSQQESHQLFSAVVRGELKPEQLAAALVSMKIRGEHPNEIAGAATALLENAAPFPRPDYLFADIVGTGGDGSNSINISTASAFVAAACGLKVAKHGNRSVSSKSGSSDLLAAFGINLDMNADKSRQALDELGVCFLFAPKYHTGFRHAMPVRQQLKTRTLFNVLGPLINPAHPPLALIGVYSPELVLPIAETLRVLGYQRAAVVHSGGMDEVSLHAPTIVAELHDGEIKSYQLTAEDFGLTPYHQEQLAGGTPEENRDILTRLLQGKGDAAHEAAVAANVAMLMRLHGHEDLQANAQTVLEVLRSGSAYDRVTALAARG.

The region spanning 3–196 is the Glutamine amidotransferase type-1 domain; it reads DILLLDNIDS…LAWAQQKLEP (194 aa). An L-glutamine-binding site is contributed by 57–59; it reads GPG. Cys-84 functions as the Nucleophile; for GATase activity in the catalytic mechanism. L-glutamine is bound by residues Gln-88 and 134-135; that span reads SL. Catalysis depends on for GATase activity residues His-170 and Glu-172. The interval 202–531 is anthranilate phosphoribosyltransferase; it reads PILEKLYQAQ…DRVTALAARG (330 aa).

This sequence in the C-terminal section; belongs to the anthranilate phosphoribosyltransferase family. Heterotetramer consisting of two non-identical subunits: a beta subunit (TrpG) and a large alpha subunit (TrpE).

It catalyses the reaction chorismate + L-glutamine = anthranilate + pyruvate + L-glutamate + H(+). The enzyme catalyses N-(5-phospho-beta-D-ribosyl)anthranilate + diphosphate = 5-phospho-alpha-D-ribose 1-diphosphate + anthranilate. It functions in the pathway amino-acid biosynthesis; L-tryptophan biosynthesis; L-tryptophan from chorismate: step 1/5. The protein operates within amino-acid biosynthesis; L-tryptophan biosynthesis; L-tryptophan from chorismate: step 2/5. With respect to regulation, cooperatively feedback inhibited by tryptophan. In terms of biological role, part of a heterotetrameric complex that catalyzes the two-step biosynthesis of anthranilate, an intermediate in the biosynthesis of L-tryptophan. In the first step, the glutamine-binding beta subunit (TrpG) of anthranilate synthase (AS) provides the glutamine amidotransferase activity which generates ammonia as a substrate that, along with chorismate, is used in the second step, catalyzed by the large alpha subunit of AS (TrpE) to produce anthranilate. In the absence of TrpG, TrpE can synthesize anthranilate directly from chorismate and high concentrations of ammonia. In addition to synthesizing anthranilate, it also catalyzes the second step of the pathway, the transfer of the phosphoribosyl group of 5-phosphorylribose-1-pyrophosphate (PRPP) to anthranilate. The sequence is that of Bifunctional protein TrpGD (trpGD) from Escherichia coli (strain K12).